The chain runs to 132 residues: Antileukoproteinase (132 aa).

Residues 1 to 25 (MKSSGLFPFLVLLALGTLAPWAVEG) form the signal peptide. 2 WAP domains span residues 28–76 (KSFK…LDPV) and 82–130 (TRRK…VSPV). 8 cysteine pairs are disulfide-bonded: cysteine 35–cysteine 64, cysteine 43–cysteine 68, cysteine 51–cysteine 63, cysteine 57–cysteine 72, cysteine 89–cysteine 118, cysteine 96–cysteine 122, cysteine 105–cysteine 117, and cysteine 111–cysteine 126. Residues 84–132 (RKPGKCPVTYGQCLMLNPPNFCEMDGQCKRDLKCCMGMCGKSCVSPVKA) are elastase inhibitory domain.

Interacts with GRN; interaction protects progranulin from proteolysis. In terms of tissue distribution, detected in blood plasma. Detected in bone marrow myeloid cells. Detected in airway sputum. Detected in parotid gland secretions. Detected in seminal plasma (at protein level). Detected in uterus cervix.

The protein resides in the secreted. In terms of biological role, acid-stable proteinase inhibitor with strong affinities for trypsin, chymotrypsin, elastase, and cathepsin G. Modulates the inflammatory and immune responses after bacterial infection, and after infection by the intracellular parasite L.major. Down-regulates responses to bacterial lipopolysaccharide (LPS). Plays a role in regulating the activation of NF-kappa-B and inflammatory responses. Has antimicrobial activity against mycobacteria, but not against salmonella. Contributes to normal resistance against infection by M.tuberculosis. Required for normal resistance to infection by L.major. Required for normal wound healing, probably by preventing tissue damage by limiting protease activity. Together with ELANE, required for normal differentiation and proliferation of bone marrow myeloid cells. This chain is Antileukoproteinase (SLPI), found in Homo sapiens (Human).